The chain runs to 710 residues: MGRARKPPPALHRHCEGCFNRHCHVPVEPSVSCLVISCHLLCGATFHMCKESEHTLLCPLEQVPCLNSEYGCPLSMARHKLAKHLQVCPASVVCCSMEWIRWPNVDSETFLHENIMKETPSEECLDTALALQDQKVLFRSLKMVELFPETRDATEEEPDMNGDTSWEETGGAVGGVDARLAPNSCLPATSRQMMELSQEERDALAKTKEGMDLDKFGKWESMFSKEHAASVLTGSLGKSEDKNGDVAGKEQCSSNVRIGDAEGSAERRGPQESQKSQELPATMEMTGLAPWQDGVLERLKTAVDAKDYNMYLVHNGRMLIHFGQMPACTPKERDFVYGNLEAQEVKTVYTFKIPVSYCGKRARLGDAMLKCRPSEHKAVDTSDLGISVEDLPKSDLIKTTLQCALERELKGHVISESRSIDGLFMDLATQTYNFEPEQFSSETVLADLLGTAQPGGLHVELHSECVTRRHNKSSSAFTFTCNKFFRRDEFPLHFKNVHTDIQSSLDGWFQHRCPLAYLGCTFVQNHFRPPGQKAKVIYSQELKTFAIKPEVAPELSEKWKSDHLSGRDGKSLNSLTSLPLEVLQYIAGFLDSISLSQLSQVSVLMRNICATLLQERGMVLSQWKKKRYSHGGTSWKVHNQIWQFSSLFSKINSWEFNDVTSMSEHLKTCPFNIVERKTDPIRLTSMCQPQEKARESLVSTFRARPRGRHF.

The TRAF-type zinc finger occupies 53 to 114 (EHTLLCPLEQ…VDSETFLHEN (62 aa)). 2 disordered regions span residues 152 to 174 (DATE…GAVG) and 234 to 279 (GSLG…SQEL). A compositionally biased stretch (basic and acidic residues) spans 238–248 (KSEDKNGDVAG). The F-box domain occupies 572–626 (LNSLTSLPLEVLQYIAGFLDSISLSQLSQVSVLMRNICATLLQERGMVLSQWKKK).

Directly interacts with SKP1 and CUL1. In terms of tissue distribution, expressed only in heart and skeletal muscle.

Its subcellular location is the cytoplasm. Its function is as follows. Probable substrate-recognition component of the SCF (SKP1-CUL1-F-box protein)-type E3 ubiquitin ligase complex that may function in myogenesis. The sequence is that of F-box only protein 40 (Fbxo40) from Mus musculus (Mouse).